A 230-amino-acid polypeptide reads, in one-letter code: UPF0173 metal-dependent hydrolase MM_2300 (230 aa).

The protein belongs to the UPF0173 family.

In Methanosarcina mazei (strain ATCC BAA-159 / DSM 3647 / Goe1 / Go1 / JCM 11833 / OCM 88) (Methanosarcina frisia), this protein is UPF0173 metal-dependent hydrolase MM_2300.